Here is a 476-residue protein sequence, read N- to C-terminus: Probable flippase AglR (476 aa).

Transmembrane regions (helical) follow at residues 7–29, 34–56, 83–103, 112–132, 146–166, 168–188, 222–242, 246–266, 287–307, 310–330, 354–373, 377–396, 409–429, and 439–459; these read ASAL…TIYV, GVGA…IPAV, VLTG…SPFV, TQLV…LGGL, ALWG…GVGV, ALFY…VYSL, WLDT…IYEV, ISAL…PTIS, VAGV…GDIL, YGPS…LSVV, FRIG…SLIP, VIGA…ILAV, VSAI…LFTI, and IEVV…LLSL.

This sequence belongs to the AglR/Agl15 family.

Its subcellular location is the cell membrane. It functions in the pathway cell surface structure biogenesis; S-layer biogenesis. Its function is as follows. Involved in the assembly of a N-linked pentasaccharide that decorates the S-layer glycoprotein and flagellins. Probably mediates or contributes to the translocation of the dolichol-phosphate-mannose across the membrane. The protein is Probable flippase AglR (aglR) of Haloferax volcanii (strain ATCC 29605 / DSM 3757 / JCM 8879 / NBRC 14742 / NCIMB 2012 / VKM B-1768 / DS2) (Halobacterium volcanii).